A 454-amino-acid polypeptide reads, in one-letter code: Tumor necrosis factor receptor superfamily member 1A (454 aa).

The signal sequence occupies residues 1 to 29; that stretch reads MGLPTVPGLLLSLVLLALLMGIHPSGVTG. The Extracellular segment spans residues 30–212; that stretch reads LVPSLGDREK…VTNPQDSGTA (183 aa). TNFR-Cys repeat units follow at residues 43 to 82, 83 to 125, 126 to 166, and 167 to 196; these read LCPQGKYVHSKNNSICCTKCHKGTYLVSDCPSPGRDTVCR, ECEK…DTVC, GCKE…NTVC, and NCHAGFFLRESECVPCSHCKKNEECMKLCL. 12 cysteine pairs are disulfide-bonded: Cys44–Cys58, Cys59–Cys72, Cys62–Cys81, Cys84–Cys99, Cys102–Cys117, Cys105–Cys125, Cys127–Cys143, Cys146–Cys158, Cys149–Cys166, Cys168–Cys179, Cys182–Cys195, and Cys185–Cys191. An N-linked (GlcNAc...) asparagine glycan is attached at Asn54. The N-linked (GlcNAc...) asparagine glycan is linked to Asn151. A glycan (N-linked (GlcNAc...) asparagine) is linked at Asn202. A helical transmembrane segment spans residues 213–235; that stretch reads VLLPLVILLGLCLLSFIFISLMC. Topologically, residues 236–454 are cytoplasmic; sequence RYPRWRPEVY…APSSTTRLPR (219 aa). The N-SMase activation domain (NSD) stretch occupies residues 339–349; it reads VQKWEDSAHPQ. One can recognise a Death domain in the interval 356–441; it reads LAILYAVVDG…GCLENILEAL (86 aa). Arg376 carries a (Microbial infection) N-beta-linked (GlcNAc) arginine glycan.

Binding of TNF to the extracellular domain leads to homotrimerization. The aggregated death domains provide a novel molecular interface that interacts specifically with the death domain of TRADD. Various TRADD-interacting proteins such as TRAFS, RIPK1 and possibly FADD, are recruited to the complex by their association with TRADD. This complex activates at least two distinct signaling cascades, apoptosis and NF-kappa-B signaling. Interacts with BAG4, BABAM2, FEM1B, GRB2, SQSTM1 and TRPC4AP. Interacts with DAB2IP. Interacts directly with NOL3 (via CARD domain); inhibits TNF-signaling pathway. Interacts with SH3RF2, TRADD and RIPK1. SH3RF2 facilitates the recruitment of RIPK1 and TRADD to TNFRSF1A in a TNF-alpha-dependent process. Interacts with PGLYRP1; this interaction is important for cell death induction. Interacts (via death domain) with MADD (via death domain). In terms of processing, (Microbial infection) Glycosylated at Arg-376 by S.typhimurium protein Ssek3: arginine GlcNAcylation prevents homotypic/heterotypic death domain interactions.

The protein localises to the cell membrane. It localises to the golgi apparatus membrane. In terms of biological role, receptor for TNFSF2/TNF-alpha and homotrimeric TNFSF1/lymphotoxin-alpha. The adapter molecule FADD recruits caspase-8 to the activated receptor. The resulting death-inducing signaling complex (DISC) performs caspase-8 proteolytic activation which initiates the subsequent cascade of caspases (aspartate-specific cysteine proteases) mediating apoptosis. This Mus musculus (Mouse) protein is Tumor necrosis factor receptor superfamily member 1A (Tnfrsf1a).